A 101-amino-acid polypeptide reads, in one-letter code: Urease subunit beta (101 aa).

This sequence belongs to the urease beta subunit family. As to quaternary structure, heterotrimer of UreA (gamma), UreB (beta) and UreC (alpha) subunits. Three heterotrimers associate to form the active enzyme.

Its subcellular location is the cytoplasm. It catalyses the reaction urea + 2 H2O + H(+) = hydrogencarbonate + 2 NH4(+). It functions in the pathway nitrogen metabolism; urea degradation; CO(2) and NH(3) from urea (urease route): step 1/1. This Albidiferax ferrireducens (strain ATCC BAA-621 / DSM 15236 / T118) (Rhodoferax ferrireducens) protein is Urease subunit beta.